A 186-amino-acid chain; its full sequence is Transcription factor pgmR (186 aa).

Residues cysteine 19 to cysteine 46 constitute a DNA-binding region (zn(2)-C6 fungal-type). The disordered stretch occupies residues arginine 52–leucine 98.

The protein resides in the nucleus. Functionally, transcription factor that specifically regulates the expression of the pgm gene cluster that mediates the biosynthesis of cryptic naphthoquinones derived pigments responsible for the coloration of the fruiting bodies. The chain is Transcription factor pgmR from Aspergillus terreus (strain NIH 2624 / FGSC A1156).